Here is a 1039-residue protein sequence, read N- to C-terminus: Tetratricopeptide repeat protein 1 (1039 aa).

TPR repeat units follow at residues 51–84 (REFW…LKDS), 175–208 (ILGF…NPQF), 210–243 (PDPR…DPKN), 251–288 (GLYY…RNND), 326–359 (ADGY…DDRH), 361–393 (LSSV…NQSC), 437–469 (SDLY…LESA), 514–547 (LLLD…HPSF), 634–667 (EFRV…DPKN), 701–734 (ATTL…TGES), 737–770 (YGVL…ATLA), and 799–832 (PENS…EHPP). Residues 838-929 (IEQRAKMAKN…SQQKASEDDM (92 aa)) are a coiled coil. Residues 912–1039 (EEVLEWRKSQ…LNLFSEEDEE (128 aa)) form a disordered region. Residues 927 to 936 (DDMSLSDDEE) show a composition bias toward acidic residues. Phosphoserine is present on residues Ser-930 and Ser-932. Residues 940 to 953 (GKKKKKDRKKRKSK) show a composition bias toward basic residues. 4 positions are modified to phosphoserine: Ser-959, Ser-961, Ser-964, and Ser-998. Residues 992 to 1006 (YTFDQDSDAEGNQEE) are compositionally biased toward acidic residues. Residues 1007–1018 (EVSRTIEEKQDN) show a composition bias toward basic and acidic residues.

Functionally, involved in promoting potassiumm ion uptake. The protein is Tetratricopeptide repeat protein 1 (tpr1) of Schizosaccharomyces pombe (strain 972 / ATCC 24843) (Fission yeast).